The sequence spans 489 residues: 3-octaprenyl-4-hydroxybenzoate carboxy-lyase (489 aa).

Asn-172 provides a ligand contact to Mn(2+). Prenylated FMN is bound by residues 175–177, 189–191, and 194–195; these read IYR, RWL, and RG. Glu-238 serves as a coordination point for Mn(2+). The Proton donor role is filled by Asp-287.

The protein belongs to the UbiD family. In terms of assembly, homohexamer. Prenylated FMN is required as a cofactor. The cofactor is Mn(2+).

Its subcellular location is the cell membrane. It carries out the reaction a 4-hydroxy-3-(all-trans-polyprenyl)benzoate + H(+) = a 2-(all-trans-polyprenyl)phenol + CO2. It functions in the pathway cofactor biosynthesis; ubiquinone biosynthesis. Functionally, catalyzes the decarboxylation of 3-octaprenyl-4-hydroxy benzoate to 2-octaprenylphenol, an intermediate step in ubiquinone biosynthesis. This is 3-octaprenyl-4-hydroxybenzoate carboxy-lyase from Aeromonas salmonicida (strain A449).